Consider the following 308-residue polypeptide: Barttin (308 aa).

Topologically, residues 1 to 5 (MADEK) are cytoplasmic. Positions 1 to 72 (MADEKTFRIG…VPADSDFQGM (72 aa)) are regulates channel membrane trafficking and anion conductance. The helical transmembrane segment at 6–26 (TFRIGFIVLGLFLLSLGTFLM) threads the bilayer. Residues 27–32 (SHDRPQ) lie on the Extracellular side of the membrane. The chain crosses the membrane as a helical span at residues 33–53 (VYGTFYAMGSIMVIGGVLWSM). Residues C54 and C56 are each lipidated (S-palmitoyl cysteine). Topologically, residues 54 to 308 (CQCYPKITFV…ELGFEPDVQG (255 aa)) are cytoplasmic. Residues S79 and S107 each carry the phosphoserine modification. Disordered regions lie at residues 127 to 149 (PLLA…HSAQ) and 162 to 308 (LDEK…DVQG). Residues 162–171 (LDEKEGEKSR) show a composition bias toward basic and acidic residues. Positions 172 to 183 (SQSSPPACSQGS) are enriched in polar residues. The segment covering 274–283 (EEPEQEEEDL) has biased composition (acidic residues). S290 bears the Phosphoserine mark.

In terms of assembly, interacts with CLCNK channels. Forms heteromers with CLCNKA in the thin ascending limb of Henle and with CLCNKB in the thick ascending limb and more distal segments. In terms of processing, palmitoylation is necessary for activation of plasma membrane-inserted CLC-K/barttin channels. In terms of tissue distribution, expressed along the distal nephron.

The protein localises to the basolateral cell membrane. Functionally, regulatory subunit of anion-selective CLCNKA:BSND and CLCNKB:BSND heteromeric channels involved in basolateral chloride conductance along the nephron to achieve urine concentration and maintain systemic acid-base homeostasis, and in the stria vascularis of the inner ear to establish the endocochlear potential necessary for normal hearing. Most likely acts as a chaperone that allosterically regulates proper sorting of CLCNKA:BSND and CLCNKB:BSND channels at the basolateral plasma membrane domain and functional switch to ion conducting state. Mediates constitutive opening of channel common gates. This chain is Barttin, found in Rattus norvegicus (Rat).